The chain runs to 181 residues: ATP-dependent protease subunit HslV (181 aa).

T9 is a catalytic residue. The Na(+) site is built by S166, C169, and T172.

The protein belongs to the peptidase T1B family. HslV subfamily. In terms of assembly, a double ring-shaped homohexamer of HslV is capped on each side by a ring-shaped HslU homohexamer. The assembly of the HslU/HslV complex is dependent on binding of ATP.

The protein localises to the cytoplasm. The catalysed reaction is ATP-dependent cleavage of peptide bonds with broad specificity.. Its activity is regulated as follows. Allosterically activated by HslU binding. Functionally, protease subunit of a proteasome-like degradation complex believed to be a general protein degrading machinery. The polypeptide is ATP-dependent protease subunit HslV (Staphylococcus haemolyticus (strain JCSC1435)).